Consider the following 93-residue polypeptide: Alpha-defensin 23 (93 aa).

A signal peptide spans 1–19 (MKTLVLLSALILLAFQVQA). Residues 20-58 (DPIQNTDEETKTEEQPGKEDQAVSVSFGDPEGSSLQEES) constitute a propeptide that is removed on maturation. The disordered stretch occupies residues 24-54 (NTDEETKTEEQPGKEDQAVSVSFGDPEGSSL). Residues 27–40 (EETKTEEQPGKEDQ) show a composition bias toward basic and acidic residues. Disulfide bonds link cysteine 64-cysteine 92, cysteine 66-cysteine 81, and cysteine 71-cysteine 91.

The protein belongs to the alpha-defensin family.

The protein localises to the secreted. May have microbicidal activities. The sequence is that of Alpha-defensin 23 (Defa23) from Mus musculus (Mouse).